A 151-amino-acid polypeptide reads, in one-letter code: Putative pre-16S rRNA nuclease (151 aa).

Belongs to the YqgF nuclease family.

It is found in the cytoplasm. Its function is as follows. Could be a nuclease involved in processing of the 5'-end of pre-16S rRNA. This Onion yellows phytoplasma (strain OY-M) protein is Putative pre-16S rRNA nuclease.